A 322-amino-acid chain; its full sequence is 4-hydroxythreonine-4-phosphate dehydrogenase (322 aa).

Residue T132 coordinates substrate. Residues H160, H205, and H260 each coordinate a divalent metal cation. Substrate-binding residues include K268, N277, and R286.

The protein belongs to the PdxA family. As to quaternary structure, homodimer. Requires Zn(2+) as cofactor. Mg(2+) serves as cofactor. Co(2+) is required as a cofactor.

It is found in the cytoplasm. The catalysed reaction is 4-(phosphooxy)-L-threonine + NAD(+) = 3-amino-2-oxopropyl phosphate + CO2 + NADH. The protein operates within cofactor biosynthesis; pyridoxine 5'-phosphate biosynthesis; pyridoxine 5'-phosphate from D-erythrose 4-phosphate: step 4/5. Its function is as follows. Catalyzes the NAD(P)-dependent oxidation of 4-(phosphooxy)-L-threonine (HTP) into 2-amino-3-oxo-4-(phosphooxy)butyric acid which spontaneously decarboxylates to form 3-amino-2-oxopropyl phosphate (AHAP). This Xanthomonas campestris pv. campestris (strain 8004) protein is 4-hydroxythreonine-4-phosphate dehydrogenase.